An 89-amino-acid polypeptide reads, in one-letter code: Small ribosomal subunit protein uS15 (89 aa).

This sequence belongs to the universal ribosomal protein uS15 family. As to quaternary structure, part of the 30S ribosomal subunit. Forms a bridge to the 50S subunit in the 70S ribosome, contacting the 23S rRNA.

In terms of biological role, one of the primary rRNA binding proteins, it binds directly to 16S rRNA where it helps nucleate assembly of the platform of the 30S subunit by binding and bridging several RNA helices of the 16S rRNA. Its function is as follows. Forms an intersubunit bridge (bridge B4) with the 23S rRNA of the 50S subunit in the ribosome. In Desulforudis audaxviator (strain MP104C), this protein is Small ribosomal subunit protein uS15.